We begin with the raw amino-acid sequence, 540 residues long: 2,3-bisphosphoglycerate-independent phosphoglycerate mutase (540 aa).

Residues D24 and S74 each coordinate Mn(2+). The active-site Phosphoserine intermediate is S74. Substrate-binding positions include H135, R165–D166, R197, R203, R268–R271, and K341. D408, H412, D449, H450, and H467 together coordinate Mn(2+).

This sequence belongs to the BPG-independent phosphoglycerate mutase family. As to quaternary structure, monomer. It depends on Mn(2+) as a cofactor.

It carries out the reaction (2R)-2-phosphoglycerate = (2R)-3-phosphoglycerate. The protein operates within carbohydrate degradation; glycolysis; pyruvate from D-glyceraldehyde 3-phosphate: step 3/5. Its function is as follows. Catalyzes the interconversion of 2-phosphoglycerate and 3-phosphoglycerate. This Prochlorococcus marinus (strain MIT 9313) protein is 2,3-bisphosphoglycerate-independent phosphoglycerate mutase.